The chain runs to 158 residues: AP-1 complex subunit sigma-1A (158 aa).

At Ser147 the chain carries Phosphoserine.

It belongs to the adaptor complexes small subunit family. Adaptor protein complex 1 (AP-1) is a heterotetramer composed of two large adaptins (gamma-type subunit AP1G1 and beta-type subunit AP1B1), a medium adaptin (mu-type subunit AP1M1 or AP1M2) and a small adaptin (sigma-type subunit AP1S1 or AP1S2 or AP1S3). In terms of tissue distribution, widely expressed.

It is found in the golgi apparatus. The protein resides in the cytoplasmic vesicle membrane. Its subcellular location is the membrane. The protein localises to the clathrin-coated pit. Its function is as follows. Subunit of clathrin-associated adaptor protein complex 1 that plays a role in protein sorting in the late-Golgi/trans-Golgi network (TGN) and/or endosomes. The AP complexes mediate both the recruitment of clathrin to membranes and the recognition of sorting signals within the cytosolic tails of transmembrane cargo molecules. In Homo sapiens (Human), this protein is AP-1 complex subunit sigma-1A (AP1S1).